Here is a 405-residue protein sequence, read N- to C-terminus: Insertion element IS110 uncharacterized 43.6 kDa protein (405 aa).

This is Insertion element IS110 uncharacterized 43.6 kDa protein from Streptomyces coelicolor (strain ATCC BAA-471 / A3(2) / M145).